A 164-amino-acid chain; its full sequence is S-ribosylhomocysteine lyase (164 aa).

Fe cation is bound by residues histidine 54, histidine 58, and cysteine 128.

This sequence belongs to the LuxS family. In terms of assembly, homodimer. The cofactor is Fe cation.

It carries out the reaction S-(5-deoxy-D-ribos-5-yl)-L-homocysteine = (S)-4,5-dihydroxypentane-2,3-dione + L-homocysteine. Its function is as follows. Involved in the synthesis of autoinducer 2 (AI-2) which is secreted by bacteria and is used to communicate both the cell density and the metabolic potential of the environment. The regulation of gene expression in response to changes in cell density is called quorum sensing. Catalyzes the transformation of S-ribosylhomocysteine (RHC) to homocysteine (HC) and 4,5-dihydroxy-2,3-pentadione (DPD). This chain is S-ribosylhomocysteine lyase, found in Campylobacter jejuni subsp. jejuni serotype O:2 (strain ATCC 700819 / NCTC 11168).